Here is a 272-residue protein sequence, read N- to C-terminus: uncharacterized protein (272 aa).

6 helical membrane passes run 20–37, 57–77, 97–119, 155–177, 184–203, and 234–256; these read VYLSVFIVLALYCVNLLI, HPLTYTIIPTYLVVLTAHFSL, LNVSCIAIVTTGYSVLIAFIMLM, SIATLLLLWLLLFLLGLLFYVIF, LVSLLFVFLLNIMNAAVTLG, and PYSIFVYWIMLIAVIYLIGWLVI.

The protein localises to the cell membrane. This is an uncharacterized protein from Halalkalibacterium halodurans (strain ATCC BAA-125 / DSM 18197 / FERM 7344 / JCM 9153 / C-125) (Bacillus halodurans).